The primary structure comprises 1081 residues: MGEDKETNILAGLGNTISQVENVVAASLRPLPTATGDGTYVAESTQTGLAKDLSHVDLKDVRTLAEVVKSAATGEPVDDKQYIMERVIQLAAGLPSTSRNAAELTKSFLNMLWNDLEHPPVSYLGADSMHRKADGSGNNRFWPQLGAAGSAYARSVRPKTMQSPSLPDPETIFDCLLRRKEYREHPNKISSVLFYLASIIIHDLFQTDPKDNSVSKTSSYLDLSPLYGNNQDEQNLVRTFKDGKLKPDCFATKRVLGFPPGVGVLLIMFNRFHNYVVDQLAAINECGRFTKPDESNVDEYAKYDNNLFQTGRLVTCGLYANIILKDYVRTILNINRTDSTWSLDPRMEMKDGLLGEAAAMATGNQVSAEFNVVYRWHACISKRDEKWTEDFHREIMPGVDPSTLSMQDFVAGLGRWQAGLPQEPLERPFSGLQRKPDGAFNDDDLVNLFEKSVEDCAGAFGASHVPAIFKSVEALGIMQARRWNLGTLNEFRQYFNLAPHKTFEDINSDPYIADQLKRLYDHPDLVEIYPGVVVEEAKDSMVPGSGLCTNFTISRAILSDAVALVRGDRFYTVDYTPKHLTNWAYNEIQPNNAVDQGQVFYKLVLRAFPNHFDGNSIYAHFPLVVPSENEKILKSLGVAEKYSWEKPSRISHPIFISSHAACMSILENQETFKVTWGRKIEFLMQRDKHQYGKDFMLSGDRPPNAASRKMMGSALYRDEWEAEVKNFYEQTTLKLLHKNSYKLAGVNQVDIVRDVANLAQVHFCSSVFSLPLKTDSNPRGIFAESELYKIMAAVFTAIFYDADIGKSFELNQAARTVTQQLGQLTMANVEIIAKTGLIANLVNRLHRRDVLSEYGIHMIQRLLDSGLPATEIVWTHILPTAGGMVANQAQLFSQCLDYYLSEEGSGHLPEINRLAKENTPEADELLTRYFMEGARLRSSVALPRVAAQPTVVEDNGEKLTIKAGQVVMCNLVSACMDPTAFPDPEKVKLDRDMNLYAHFGFGPHKCLGLDLCKTGLSTMLKVLGRLDNLRRAPGAQGQLKKLSGPGGIAKYMNEDQSGFTPFPSTMKIQWDGELPQLKEDF.

Residues 105-446 are linoleate 8R-lipoxygenase; it reads TKSFLNMLWN…DGAFNDDDLV (342 aa). His-202 contacts heme b. Residue Tyr-374 is part of the active site. His-377 lines the heme b pocket. Residues 654–1081 are 9,12-octadecadienoate 8-hydroperoxide 8R-isomerase; it reads IFISSHAACM…GELPQLKEDF (428 aa).

This sequence belongs to the peroxidase family. As to quaternary structure, homotetramer. Requires heme b as cofactor.

It carries out the reaction (9Z,12Z)-octadecadienoate + O2 = (8R,9Z,12Z)-8-hydroperoxyoctadeca-9,12-dienoate. The enzyme catalyses (8R,9Z,12Z)-8-hydroperoxyoctadeca-9,12-dienoate = (5S,8R,9Z,12Z)-5,8-dihydroxyoctadeca-9,12-dienoate. Bifunctional heme-containing enzyme that oxidizes linoleic acid to (8R,9Z,12Z)-8-hydroperoxyoctadeca-9,12-dienoate (within the N-terminal heme peroxidase domain), which is subsequently isomerized to (5S,8R,9Z,12Z)-5,8-dihydroxyoctadeca-9,12-dienoate (within the C-terminal P450 heme thiolate domain). Oxidized unsaturated fatty acids, so-called oxylipins, derived from endogenous fatty acids, influence the development of the asexual conidiophores and sexual cleistothecia and regulate the secondary metabolism. These substances were collectively named psi factors and are primarily a mixture of hydroxylated oleic, linoleic and alpha-linolenic acids. They are termed psi-beta, psi-alpha, and psi-gamma, respectively. The protein is Psi-producing oxygenase A (ppoA) of Emericella nidulans (Aspergillus nidulans).